We begin with the raw amino-acid sequence, 190 residues long: UPF0340 protein BCE33L5016 (190 aa).

Belongs to the UPF0340 family.

This chain is UPF0340 protein BCE33L5016, found in Bacillus cereus (strain ZK / E33L).